The chain runs to 746 residues: SNF-related serine/threonine-protein kinase (746 aa).

The Protein kinase domain occupies 16–269 (YDLDKTLGRG…LEEIESHPWL (254 aa)). Residues 22–30 (LGRGHFAVV) and K45 contribute to the ATP site. D139 acts as the Proton acceptor in catalysis. Position 162 is a phosphoserine (S162). T173 bears the Phosphothreonine; by LKB1 mark. Residues 291-334 (SEEEHNSIIQRMVLGDIADRDAIVEALETNRYNHITATYFLLAE) enclose the UBA domain. S362, S390, S482, S495, and S518 each carry phosphoserine. The interval 383–414 (SHATVPQSPARAGDSVLNGHRSKGLCDPAKKD) is disordered. Residues 494–503 (ESDDEFDMDE) show a composition bias toward acidic residues. A disordered region spans residues 494 to 638 (ESDDEFDMDE…SSSSSPASAA (145 aa)). Positions 522-532 (VHKRYHRRKSQ) are enriched in basic residues. Low complexity predominate over residues 533–542 (GRGSSCSSSE). At R534 the chain carries Omega-N-methylarginine. Residues 549–558 (ESRRRLDKDS) show a composition bias toward basic and acidic residues. 2 stretches are compositionally biased toward gly residues: residues 575–592 (GSEG…GGGV) and 600–614 (QGTG…GGTP). The span at 615 to 638 (SGTAGSSRRCAGPDSSSSSPASAA) shows a compositional bias: low complexity.

It belongs to the protein kinase superfamily. CAMK Ser/Thr protein kinase family. Mg(2+) serves as cofactor. Post-translationally, autophosphorylated. Phosphorylation on Thr-173 by STK11/LKB1 in complex with STE20-related adapter-alpha (STRADA) pseudo kinase and CAB39. Ubiquitously expressed in all tissues examined with highest levels in the brain and testis. Strongly expressed in the pyramidal and granule neurons of the hippocampus and also in the cerebellum.

It is found in the nucleus. The catalysed reaction is L-seryl-[protein] + ATP = O-phospho-L-seryl-[protein] + ADP + H(+). It carries out the reaction L-threonyl-[protein] + ATP = O-phospho-L-threonyl-[protein] + ADP + H(+). Its activity is regulated as follows. Activated by phosphorylation on Thr-173. Its function is as follows. May play a role in hematopoietic cell proliferation or differentiation. Potential mediator of neuronal apoptosis. The sequence is that of SNF-related serine/threonine-protein kinase from Rattus norvegicus (Rat).